The chain runs to 702 residues: Polyribonucleotide nucleotidyltransferase (702 aa).

Asp487 and Asp493 together coordinate Mg(2+). Residues 554 to 613 (PRLLTIKIHPDKIREVIGKGGSTIQAITKETGTQIDIQDDGTIVIASVNAIAAQAAKARI) form the KH domain. An S1 motif domain is found at 623 to 691 (GRIYEGKVAK…KQGRIRLSMK (69 aa)).

The protein belongs to the polyribonucleotide nucleotidyltransferase family. As to quaternary structure, component of the RNA degradosome, which is a multiprotein complex involved in RNA processing and mRNA degradation. The cofactor is Mg(2+).

It is found in the cytoplasm. It catalyses the reaction RNA(n+1) + phosphate = RNA(n) + a ribonucleoside 5'-diphosphate. Functionally, involved in mRNA degradation. Catalyzes the phosphorolysis of single-stranded polyribonucleotides processively in the 3'- to 5'-direction. The protein is Polyribonucleotide nucleotidyltransferase of Stenotrophomonas maltophilia (strain K279a).